The chain runs to 347 residues: Quinolinate synthase (347 aa).

H47 and S68 together coordinate iminosuccinate. C113 is a binding site for [4Fe-4S] cluster. Residues 139–141 (YAN) and S156 contribute to the iminosuccinate site. C200 lines the [4Fe-4S] cluster pocket. Iminosuccinate-binding positions include 226-228 (HPE) and T243. Residue C297 participates in [4Fe-4S] cluster binding.

This sequence belongs to the quinolinate synthase family. Type 1 subfamily. [4Fe-4S] cluster is required as a cofactor.

Its subcellular location is the cytoplasm. The catalysed reaction is iminosuccinate + dihydroxyacetone phosphate = quinolinate + phosphate + 2 H2O + H(+). Its pathway is cofactor biosynthesis; NAD(+) biosynthesis; quinolinate from iminoaspartate: step 1/1. Its function is as follows. Catalyzes the condensation of iminoaspartate with dihydroxyacetone phosphate to form quinolinate. This is Quinolinate synthase from Shigella flexneri serotype 5b (strain 8401).